Here is a 222-residue protein sequence, read N- to C-terminus: Collectrin (222 aa).

The first 14 residues, M1–A14, serve as a signal peptide directing secretion. Over D15 to P141 the chain is Extracellular. A Collectrin-like domain is found at A21–L222. N76 and N93 each carry an N-linked (GlcNAc...) asparagine glycan. A helical transmembrane segment spans residues I142–I162. The Cytoplasmic segment spans residues I163–L222. Residues T214 and T220 each carry the phosphothreonine modification.

The protein belongs to the CLTRN family. In terms of assembly, monomer. Homodimer; dimerization prevents CLTRN cleavage by BACE2. Interacts with SLC6A18; this interaction regulates the trafficking of SLC6A18 to the cell membrane and its amino acid transporter activity. Interacts with SLC6A19; this interaction regulates the trafficking of SLC6A19 to the cell membrane and its amino acid transporter activity. Interacts with SNAPIN. Glycosylated. Glycosylation is required for plasma membrane localization and for its cleavage by BACE2. Post-translationally, proteolytically processed in pancreatic beta cells by BACE2 leading to the generation and extracellular release of soluble CLTRN, and a corresponding cell-associated C-terminal fragment which is later cleaved by gamma-secretase. This shedding process inactivates CLTRN. Three cleavage sites have been identified for BACE2, two clustered sites after Phe-116 and Leu-118 and a more membrane proximal site at Phe-125; the preferred BACE2 cleavage site seems to be between Phe-125 and Leu-126, Phe-116 and Leu-118 act as alternative sites.

Its subcellular location is the cell membrane. Plays an important role in amino acid transport by acting as binding partner of amino acid transporters SLC6A18 and SLC6A19, regulating their trafficking on the cell surface and their activity. May also play a role in trafficking of amino acid transporters SLC3A1 and SLC7A9 to the renal cortical cell membrane. Regulator of SNARE complex function. Stimulator of beta cell replication. In Bos taurus (Bovine), this protein is Collectrin (CLTRN).